A 104-amino-acid polypeptide reads, in one-letter code: NADH dehydrogenase [ubiquinone] flavoprotein 3, mitochondrial (104 aa).

The N-terminal 35 residues, 1–35 (MAVSLLLRGGRIRALKAVLLEARVFPGELVSVVRL), are a transit peptide targeting the mitochondrion. A compositionally biased stretch (basic and acidic residues) spans 38-50 (ESEKSAKEKELHP). Positions 38–68 (ESEKSAKEKELHPKTQSVLKEPEPTDTTTYK) are disordered. Phosphoserine is present on Ser101.

It belongs to the complex I NDUFV3 subunit family. Complex I is composed of 45 different subunits. This is a component of the flavoprotein-sulfur (FP) fragment of the enzyme.

The protein resides in the mitochondrion inner membrane. Its function is as follows. Accessory subunit of the mitochondrial membrane respiratory chain NADH dehydrogenase (Complex I), that is believed not to be involved in catalysis. Complex I functions in the transfer of electrons from NADH to the respiratory chain. The immediate electron acceptor for the enzyme is believed to be ubiquinone. May be the terminally assembled subunit of Complex I. The sequence is that of NADH dehydrogenase [ubiquinone] flavoprotein 3, mitochondrial (Ndufv3) from Mus musculus (Mouse).